Reading from the N-terminus, the 182-residue chain is Inosine/xanthosine triphosphatase (182 aa).

Mg(2+) contacts are provided by Asp38 and Glu68. 68-69 (EA) provides a ligand contact to substrate.

The protein belongs to the YjjX NTPase family. In terms of assembly, homodimer. It depends on Mg(2+) as a cofactor. Requires Mn(2+) as cofactor.

The enzyme catalyses XTP + H2O = XDP + phosphate + H(+). It carries out the reaction ITP + H2O = IDP + phosphate + H(+). Phosphatase that hydrolyzes non-canonical purine nucleotides such as XTP and ITP to their respective diphosphate derivatives. Probably excludes non-canonical purines from DNA/RNA precursor pool, thus preventing their incorporation into DNA/RNA and avoiding chromosomal lesions. In Erwinia tasmaniensis (strain DSM 17950 / CFBP 7177 / CIP 109463 / NCPPB 4357 / Et1/99), this protein is Inosine/xanthosine triphosphatase.